A 567-amino-acid polypeptide reads, in one-letter code: Proline--tRNA ligase (567 aa).

Belongs to the class-II aminoacyl-tRNA synthetase family. ProS type 1 subfamily. As to quaternary structure, homodimer.

The protein localises to the cytoplasm. The enzyme catalyses tRNA(Pro) + L-proline + ATP = L-prolyl-tRNA(Pro) + AMP + diphosphate. Catalyzes the attachment of proline to tRNA(Pro) in a two-step reaction: proline is first activated by ATP to form Pro-AMP and then transferred to the acceptor end of tRNA(Pro). As ProRS can inadvertently accommodate and process non-cognate amino acids such as alanine and cysteine, to avoid such errors it has two additional distinct editing activities against alanine. One activity is designated as 'pretransfer' editing and involves the tRNA(Pro)-independent hydrolysis of activated Ala-AMP. The other activity is designated 'posttransfer' editing and involves deacylation of mischarged Ala-tRNA(Pro). The misacylated Cys-tRNA(Pro) is not edited by ProRS. This chain is Proline--tRNA ligase, found in Staphylococcus aureus (strain bovine RF122 / ET3-1).